The following is a 48-amino-acid chain: ATP synthase protein 8 (48 aa).

A helical membrane pass occupies residues 13-33 (LTYGFLLLIILLVLFSQFLLP).

The protein belongs to the ATPase protein 8 family. As to quaternary structure, F-type ATPases have 2 components, CF(1) - the catalytic core - and CF(0) - the membrane proton channel.

The protein resides in the mitochondrion membrane. Mitochondrial membrane ATP synthase (F(1)F(0) ATP synthase or Complex V) produces ATP from ADP in the presence of a proton gradient across the membrane which is generated by electron transport complexes of the respiratory chain. F-type ATPases consist of two structural domains, F(1) - containing the extramembraneous catalytic core and F(0) - containing the membrane proton channel, linked together by a central stalk and a peripheral stalk. During catalysis, ATP synthesis in the catalytic domain of F(1) is coupled via a rotary mechanism of the central stalk subunits to proton translocation. Part of the complex F(0) domain. Minor subunit located with subunit a in the membrane. This is ATP synthase protein 8 (ATP8) from Wickerhamomyces canadensis (Yeast).